We begin with the raw amino-acid sequence, 413 residues long: Phosphoglycerate kinase (413 aa).

Substrate-binding positions include 24-26 (DFN), Arg-39, 62-65 (HLSR), Arg-123, and Arg-165. ATP-binding positions include Lys-216, Glu-343, and 369-372 (GGDS).

This sequence belongs to the phosphoglycerate kinase family. As to quaternary structure, monomer.

Its subcellular location is the cytoplasm. It carries out the reaction (2R)-3-phosphoglycerate + ATP = (2R)-3-phospho-glyceroyl phosphate + ADP. It functions in the pathway carbohydrate degradation; glycolysis; pyruvate from D-glyceraldehyde 3-phosphate: step 2/5. In Mycoplasmoides gallisepticum (strain R(low / passage 15 / clone 2)) (Mycoplasma gallisepticum), this protein is Phosphoglycerate kinase.